A 70-amino-acid chain; its full sequence is Large ribosomal subunit protein bL31 (70 aa).

Zn(2+) is bound by residues Cys-16, Cys-18, Cys-38, and Cys-41.

Belongs to the bacterial ribosomal protein bL31 family. Type A subfamily. In terms of assembly, part of the 50S ribosomal subunit. It depends on Zn(2+) as a cofactor.

In terms of biological role, binds the 23S rRNA. In Saccharopolyspora erythraea (strain ATCC 11635 / DSM 40517 / JCM 4748 / NBRC 13426 / NCIMB 8594 / NRRL 2338), this protein is Large ribosomal subunit protein bL31.